A 181-amino-acid polypeptide reads, in one-letter code: Lipoprotein signal peptidase (181 aa).

A run of 3 helical transmembrane segments spans residues 25–45 (LFYK…QVFI), 86–106 (LVYF…VFMV), and 107–127 (KYSY…NFFD). Residues aspartate 138 and aspartate 153 contribute to the active site. Residues 149–169 (FNFADCCITFGFIGLFFCFLI) traverse the membrane as a helical segment.

This sequence belongs to the peptidase A8 family.

It localises to the cell membrane. It carries out the reaction Release of signal peptides from bacterial membrane prolipoproteins. Hydrolyzes -Xaa-Yaa-Zaa-|-(S,diacylglyceryl)Cys-, in which Xaa is hydrophobic (preferably Leu), and Yaa (Ala or Ser) and Zaa (Gly or Ala) have small, neutral side chains.. It participates in protein modification; lipoprotein biosynthesis (signal peptide cleavage). Its function is as follows. This protein specifically catalyzes the removal of signal peptides from prolipoproteins. This chain is Lipoprotein signal peptidase, found in Mycoplasma genitalium (strain ATCC 33530 / DSM 19775 / NCTC 10195 / G37) (Mycoplasmoides genitalium).